We begin with the raw amino-acid sequence, 160 residues long: Ribosomal RNA large subunit methyltransferase H (160 aa).

S-adenosyl-L-methionine contacts are provided by residues leucine 78, glycine 109, and leucine 128–leucine 133.

It belongs to the RNA methyltransferase RlmH family. As to quaternary structure, homodimer.

The protein localises to the cytoplasm. It carries out the reaction pseudouridine(1915) in 23S rRNA + S-adenosyl-L-methionine = N(3)-methylpseudouridine(1915) in 23S rRNA + S-adenosyl-L-homocysteine + H(+). Functionally, specifically methylates the pseudouridine at position 1915 (m3Psi1915) in 23S rRNA. This chain is Ribosomal RNA large subunit methyltransferase H, found in Alcanivorax borkumensis (strain ATCC 700651 / DSM 11573 / NCIMB 13689 / SK2).